We begin with the raw amino-acid sequence, 816 residues long: H(+)/Cl(-) exchange transporter 5 (816 aa).

Residues 1–124 (MAMWQGAMDN…WALIHSVSDA (124 aa)) lie on the Cytoplasmic side of the membrane. The next 2 membrane-spanning stretches (helical) occupy residues 125–162 (FSGW…ICTG) and 208–231 (VNYF…VKVF). The Selectivity filter part_1 motif lies at 237 to 241 (GSGIP). Serine 238 is a chloride binding site. Residues 240 to 247 (IPEIKTIL) constitute an intramembrane region (helical). The next 2 membrane-spanning stretches (helical) occupy residues 256-275 (LGKW…VSSG) and 281-300 (EGPL…HCFN). The Selectivity filter part_2 signature appears at 279–283 (GKEGP). 2 intramembrane regions (helical) span residues 312–324 (VLSA…VSVA) and 328–336 (PIGGVLFSL). Helical transmembrane passes span 348–366 (LWRS…RSIN), 389–414 (LVPF…IAWC), 422–442 (LGKY…ILAF), 498–518 (MWQL…TFGM), and 523–542 (GLFI…LGVG). The Selectivity filter part_3 motif lies at 523-527 (GLFIP). Position 525 (phenylalanine 525) interacts with chloride. The segment at residues 570–584 (GLYAMVGAAACLGGV) is an intramembrane region (helical). Positions 585–587 (TRM) form an intramembrane region, note=Loop between two helices. Residues 588-599 (TVSLVVIMFELT) constitute an intramembrane region (helical). The segment at residues 600 to 604 (GGLEY) is an intramembrane region (note=Loop between two helices). A helical transmembrane segment spans residues 605 to 622 (IVPLMAAAMTSKWVADAL). The Cytoplasmic segment spans residues 623 to 816 (GREGIYDAHI…NQDPDSILFN (194 aa)). Position 628 (tyrosine 628) interacts with chloride. CBS domains lie at 656 to 720 (MKPR…ARKK) and 752 to 812 (ILDL…DPDS). ATP-binding positions include threonine 666, 687–689 (YSG), and 794–797 (TKKD).

Belongs to the chloride channel (TC 2.A.49) family. ClC-5/CLCN5 subfamily. Interacts with NEDD4 and NEDD4L. Ubiquitinated by NEDD4L in the presence of albumin; which promotes endocytosis and proteasomal degradation.

Its subcellular location is the golgi apparatus membrane. The protein localises to the endosome membrane. The protein resides in the cell membrane. The enzyme catalyses 2 chloride(in) + H(+)(out) = 2 chloride(out) + H(+)(in). Proton-coupled chloride transporter. Functions as antiport system and exchanges chloride ions against protons. Important for normal acidification of the endosome lumen. May play an important role in renal tubular function. The CLC channel family contains both chloride channels and proton-coupled anion transporters that exchange chloride or another anion for protons. The absence of conserved gating glutamate residues is typical for family members that function as channels. This is H(+)/Cl(-) exchange transporter 5 (CLCN5) from Pongo abelii (Sumatran orangutan).